A 365-amino-acid polypeptide reads, in one-letter code: Putrescine 2-hydroxylase (365 aa).

The Rieske domain occupies 44 to 141; that stretch reads GHELMVPEVG…LQNWNGLLFE (98 aa). [2Fe-2S] cluster contacts are provided by C81, H83, C100, and H103.

The protein belongs to the bacterial ring-hydroxylating dioxygenase alpha subunit family. [2Fe-2S] cluster serves as cofactor.

Functionally, rieske-type iron sulfur protein that can catalyze in vitro the 2-hydroxylation of putrescine, forming 2-hydroxyputrescine. May be involved in the biosynthesis of the cyclic hydroxamate siderophore alcaligin. The polypeptide is Putrescine 2-hydroxylase (Ralstonia nicotianae (strain ATCC BAA-1114 / GMI1000) (Ralstonia solanacearum)).